The following is a 177-amino-acid chain: Retrograde regulation protein 1 (177 aa).

Residues 1 to 24 (MSSIPAGTDPGSCGANFKNDRKRR) are disordered. Residues 11 to 96 (GSCGANFKND…TQAVEYISHL (86 aa)) enclose the bHLH domain. Ser-50 and Ser-52 each carry phosphoserine. Disordered stretches follow at residues 52 to 82 (SNDT…KPNK) and 147 to 177 (LAAT…GNGS). Thr-60 carries the phosphothreonine modification. Residues 168–177 (GGYGEYGNGS) show a composition bias toward gly residues.

Binds DNA as a heterodimer with RTG3.

It localises to the nucleus. Its function is as follows. Required for a novel path of interorganelle communication between mitochondria, peroxisomes and the nucleus, thereby maintaining a functional metabolic interaction between the tricarboxylic acid and glyoxylate cycles. Transcription factor that regulates CIT2 gene expression. Binds to two identical sites oriented as inverted repeats 28 bp apart in a regulatory upstream activation sequence element (UASR) in the CIT2 promoter. The core binding site is 5'-GGTCAC-3'. This chain is Retrograde regulation protein 1 (RTG1), found in Saccharomyces cerevisiae (strain ATCC 204508 / S288c) (Baker's yeast).